The following is a 662-amino-acid chain: Probable protein phosphatase CG10417 (662 aa).

The PPM-type phosphatase domain maps to 23–564 (AVGASSMQGW…DNMTAVIVQF (542 aa)). Positions 57 and 58 each coordinate Mn(2+). Disordered regions lie at residues 219–275 (DGVA…FKHT) and 288–374 (GSND…DEDQ). Composition is skewed to polar residues over residues 238–252 (DSNTTTSINDLSTKN), 261–275 (NDQNEGSNGTDFKHT), and 288–319 (GSNDMTELNQSSKNEFTNSSTSKEFERNINSS). Residues Ser-289 and Ser-306 each carry the phosphoserine modification. Acidic residues predominate over residues 320 to 334 (QDDEFTDDDADYEEN). Residues 337–347 (VKSPDTSSAES) show a composition bias toward polar residues. A compositionally biased stretch (acidic residues) spans 349-374 (DCTENDDDGDEDGNEDSDEEETDEDQ). Residues Asp-506 and Asp-555 each contribute to the Mn(2+) site. Positions 591-609 (VSHSLNDQSASKRCASQNA) are enriched in polar residues. The disordered stretch occupies residues 591-662 (VSHSLNDQSA…KEVTIIVSSS (72 aa)). 3 positions are modified to phosphoserine: Ser-592, Ser-594, and Ser-599. Positions 616 to 637 (LEKNNSKRLKTDLEQENIKDRT) are enriched in basic and acidic residues. At Thr-637 the chain carries Phosphothreonine. Residues Ser-639 and Ser-641 each carry the phosphoserine modification.

It belongs to the PP2C family. Mg(2+) serves as cofactor. Requires Mn(2+) as cofactor.

It carries out the reaction O-phospho-L-seryl-[protein] + H2O = L-seryl-[protein] + phosphate. The catalysed reaction is O-phospho-L-threonyl-[protein] + H2O = L-threonyl-[protein] + phosphate. This is Probable protein phosphatase CG10417 from Drosophila melanogaster (Fruit fly).